The following is a 245-amino-acid chain: Probable phosphatase PC1_1798 (245 aa).

Positions 7, 9, 15, 40, 73, 101, 131, 192, and 194 each coordinate Zn(2+).

The protein belongs to the PHP family. Homotrimer. Requires Zn(2+) as cofactor.

The polypeptide is Probable phosphatase PC1_1798 (Pectobacterium carotovorum subsp. carotovorum (strain PC1)).